The sequence spans 86 residues: ATP synthase subunit c (86 aa).

2 helical membrane-spanning segments follow: residues 8-28 (VLAA…GAGI) and 66-86 (GIYA…IGML).

It belongs to the ATPase C chain family. As to quaternary structure, F-type ATPases have 2 components, F(1) - the catalytic core - and F(0) - the membrane proton channel. F(1) has five subunits: alpha(3), beta(3), gamma(1), delta(1), epsilon(1). F(0) has three main subunits: a(1), b(2) and c(10-14). The alpha and beta chains form an alternating ring which encloses part of the gamma chain. F(1) is attached to F(0) by a central stalk formed by the gamma and epsilon chains, while a peripheral stalk is formed by the delta and b chains.

Its subcellular location is the cell membrane. In terms of biological role, f(1)F(0) ATP synthase produces ATP from ADP in the presence of a proton or sodium gradient. F-type ATPases consist of two structural domains, F(1) containing the extramembraneous catalytic core and F(0) containing the membrane proton channel, linked together by a central stalk and a peripheral stalk. During catalysis, ATP synthesis in the catalytic domain of F(1) is coupled via a rotary mechanism of the central stalk subunits to proton translocation. Its function is as follows. Key component of the F(0) channel; it plays a direct role in translocation across the membrane. A homomeric c-ring of between 10-14 subunits forms the central stalk rotor element with the F(1) delta and epsilon subunits. The sequence is that of ATP synthase subunit c from Natranaerobius thermophilus (strain ATCC BAA-1301 / DSM 18059 / JW/NM-WN-LF).